The primary structure comprises 611 residues: Glutamine--fructose-6-phosphate aminotransferase [isomerizing] (611 aa).

Catalysis depends on cysteine 2, which acts as the Nucleophile; for GATase activity. The Glutamine amidotransferase type-2 domain maps to 2 to 219; the sequence is CGIVGAIAER…EGDIAEIRRD (218 aa). SIS domains follow at residues 287 to 427 and 460 to 601; these read AAEL…VQKR and VSEL…VDQP. Lysine 606 functions as the For Fru-6P isomerization activity in the catalytic mechanism.

In terms of assembly, homodimer.

Its subcellular location is the cytoplasm. It catalyses the reaction D-fructose 6-phosphate + L-glutamine = D-glucosamine 6-phosphate + L-glutamate. In terms of biological role, catalyzes the first step in hexosamine metabolism, converting fructose-6P into glucosamine-6P using glutamine as a nitrogen source. The chain is Glutamine--fructose-6-phosphate aminotransferase [isomerizing] from Pseudomonas aeruginosa (strain ATCC 15692 / DSM 22644 / CIP 104116 / JCM 14847 / LMG 12228 / 1C / PRS 101 / PAO1).